The following is a 718-amino-acid chain: Tensin-4 (718 aa).

An N-terminal signal peptide occupies residues 1 to 14; it reads MSSSLLTGGHVVSL. Disordered regions lie at residues 188–244 and 272–437; these read RETR…GLRA and LPHS…AKDM. The span at 192-207 shows a compositional bias: polar residues; it reads SSSNESLIFSGNQGRG. The span at 208-219 shows a compositional bias: low complexity; sequence SSPHTPSSLSNS. Residue serine 230 is modified to Phosphoserine. Low complexity predominate over residues 272–304; sequence LPHSSLSSYPPSSRSLGSPASSSSSLHSLDRGS. Composition is skewed to polar residues over residues 306 to 316, 337 to 349, 367 to 393, and 405 to 415; these read CVRSSDAQVPS, QASSCPPSVTNSM, PAQQTPRYQDSVQSRATSPSHLCQATK, and TSPSHLCQATK. The SH2 domain maps to 451 to 558; sequence WFKPSITREQ…ALPCKLTIPQ (108 aa). The PTB domain maps to 585-711; that stretch reads CHTLYLTSVS…SQVISLVTAL (127 aa).

The protein belongs to the PTEN phosphatase protein family. As to quaternary structure, interacts (via SH2 domain) with Rho GTPase-activating protein DLC1 (via C-terminus); the interaction is independent of DLC1 tyrosine phosphorylation. Interacts with integrin ITGB1; the interaction displaces tensin TNS3 from the ITGB1 cytoplasmic tail and promotes ITGB1 stability. Interacts (via SH2 domain) with E3 ubiquitin-protein ligase CBL (phosphorylated on 'Tyr-781'); the interaction is enhanced in the presence of EGF and reduces interaction of CBL with EGFR. Interacts (via SH2 domain) with receptor tyrosine kinase MET (when phosphorylated); the interaction increases MET protein stability.

Its subcellular location is the cell junction. The protein resides in the focal adhesion. It localises to the cytoplasm. The protein localises to the cytoskeleton. Functionally, promotes EGF-induced cell migration by displacing tensin TNS3 from the cytoplasmic tail of integrin ITGB1 which results in dissociation of TNS3 from focal adhesions, disassembly of actin stress fibers and initiation of cell migration. Suppresses ligand-induced degradation of EGFR by reducing EGFR ubiquitination in the presence of EGF. Increases MET protein stability by inhibiting MET endocytosis and subsequent lysosomal degradation which leads to increased cell survival, proliferation and migration. The protein is Tensin-4 (Tns4) of Rattus norvegicus (Rat).